A 342-amino-acid polypeptide reads, in one-letter code: Tetraacyldisaccharide 4'-kinase (342 aa).

68-75 contacts ATP; sequence TVGGTGKT.

The protein belongs to the LpxK family.

The catalysed reaction is a lipid A disaccharide + ATP = a lipid IVA + ADP + H(+). Its pathway is glycolipid biosynthesis; lipid IV(A) biosynthesis; lipid IV(A) from (3R)-3-hydroxytetradecanoyl-[acyl-carrier-protein] and UDP-N-acetyl-alpha-D-glucosamine: step 6/6. Its function is as follows. Transfers the gamma-phosphate of ATP to the 4'-position of a tetraacyldisaccharide 1-phosphate intermediate (termed DS-1-P) to form tetraacyldisaccharide 1,4'-bis-phosphate (lipid IVA). This Burkholderia ambifaria (strain ATCC BAA-244 / DSM 16087 / CCUG 44356 / LMG 19182 / AMMD) (Burkholderia cepacia (strain AMMD)) protein is Tetraacyldisaccharide 4'-kinase.